Consider the following 408-residue polypeptide: tRNA-specific 2-thiouridylase MnmA (408 aa).

ATP contacts are provided by residues Ala-27–Ser-34 and Leu-53. Cys-121 acts as the Nucleophile in catalysis. Residues Cys-121 and Cys-222 are joined by a disulfide bond. Gly-145 contacts ATP. The interaction with tRNA stretch occupies residues Arg-172–Gln-174. Residue Cys-222 is the Cysteine persulfide intermediate of the active site.

The protein belongs to the MnmA/TRMU family.

The protein resides in the cytoplasm. It carries out the reaction S-sulfanyl-L-cysteinyl-[protein] + uridine(34) in tRNA + AH2 + ATP = 2-thiouridine(34) in tRNA + L-cysteinyl-[protein] + A + AMP + diphosphate + H(+). In terms of biological role, catalyzes the 2-thiolation of uridine at the wobble position (U34) of tRNA, leading to the formation of s(2)U34. This is tRNA-specific 2-thiouridylase MnmA from Rhizobium etli (strain ATCC 51251 / DSM 11541 / JCM 21823 / NBRC 15573 / CFN 42).